We begin with the raw amino-acid sequence, 575 residues long: Acyloxyacyl hydrolase (575 aa).

The first 23 residues, 1–23 (MQSPWKILTVAPLFLLLSLQSSA), serve as a signal peptide directing secretion. A propeptide spanning residues 24–34 (SPANDDQSRPS) is cleaved from the precursor. The 82-residue stretch at 37–118 (NGHTCVGCVL…HTLEFCKQNT (82 aa)) folds into the Saposin B-type domain. Residues 38–70 (GHTCVGCVLVVSVIEQLAQVHNSTVQASMERLC) form an important for enzyme activity, localization to cytoplasmic vesicles, and protein stability region. 8 disulfides stabilise this stretch: Cys41–Cys114, Cys44–Cys108, Cys70–Cys83, Cys123–Cys453, Cys160–Cys169, Cys206–Cys230, Cys249–Cys329, and Cys376–Cys459. Asn59 carries N-linked (GlcNAc...) asparagine glycosylation. Residues 173-177 (KLAME) are lipopolysaccharide binding. Asp184, Asp186, Asp188, Tyr190, Asp205, Asn207, Asp208, Asp210, Val213, Asp223, Asp227, Asn229, Asn231, Ile233, and Glu245 together coordinate Ca(2+). Asn207 carries an N-linked (GlcNAc...) asparagine glycan. The active site involves Ser263. Residues Asn409 and Asn466 are each glycosylated (N-linked (GlcNAc...) asparagine).

In terms of assembly, heterodimer of the large and small subunits; disulfide-linked. Ca(2+) serves as cofactor. Post-translationally, cleaved into a large and a small subunit. In terms of processing, the small subunit is N-glycosylated.

It localises to the secreted. The protein resides in the cytoplasmic vesicle. It carries out the reaction a 3-(acyloxy)acyl derivative of bacterial toxin + H2O = a 3-hydroxyacyl derivative of bacterial toxin + a fatty acid + H(+). Its activity is regulated as follows. Inhibited by EDTA. Functionally, removes the secondary (acyloxyacyl-linked) fatty acyl chains from the lipid A region of bacterial lipopolysaccharides. By breaking down LPS, terminates the host response to bacterial infection and prevents prolonged and damaging inflammatory responses. In peritoneal macrophages, seems to be important for recovery from a state of immune tolerance following infection by Gram-negative bacteria. The sequence is that of Acyloxyacyl hydrolase from Homo sapiens (Human).